The sequence spans 243 residues: Carboxy-S-adenosyl-L-methionine synthase (243 aa).

S-adenosyl-L-methionine contacts are provided by residues Tyr-40, 65-67, 90-91, 118-119, Asn-133, and Arg-200; these read GSS, DN, and DI.

This sequence belongs to the class I-like SAM-binding methyltransferase superfamily. Cx-SAM synthase family. In terms of assembly, homodimer.

The enzyme catalyses prephenate + S-adenosyl-L-methionine = carboxy-S-adenosyl-L-methionine + 3-phenylpyruvate + H2O. Functionally, catalyzes the conversion of S-adenosyl-L-methionine (SAM) to carboxy-S-adenosyl-L-methionine (Cx-SAM). The polypeptide is Carboxy-S-adenosyl-L-methionine synthase (Shewanella denitrificans (strain OS217 / ATCC BAA-1090 / DSM 15013)).